The primary structure comprises 1229 residues: MGSEPPPSEKKVREPFSRAMKDVQISDEQRLKELWHLLDLLEIEYKKTADLHTLISSVSESLTMVWKRRDPKSELALKGLLLILEYCLSHVFDGHAVFEIFVSSLGFNTVIFWKHCAGYIFDSDLGRGTKFRDALLFSLTLYDVNTGKNRLRELYAAVPGIRKSLLGVNAKQFGERYHHLQKRLARYGSHTSLCSVSSDSEGEEAIHNVRSGTHTESESEEDPKAPRSGLATSHFQQRVINVSNAPPVSLKREKTGDWEIKQGSGGLVACVDPVMSKDHENLWLANLGMNINDKKQKRPGSVASIPESFPSTNTLGLPLIKQTIAEVFFHVLADDDMDAPKNEKQKKAREEMSLLGVLNNYNRGNYKLNPVVVQEDDYNVYYGGISNGLLWPALHNLPEYIVSEYDDEKILRAHWCAYVRVNYQFAIDAVRNSRPQDFIWIHDYHLMLVGMIMQSLDQHLEVGFFLHIPFQPPGEFFSKYSTVGFAVLRGLLRFTKVGFQTHRDRTKYIELVQHYFGTAKIVYDNKMDIYSITNEGWTCSLGVFPVSIKNDDFLKFVDLPETIKLKNDLRKRVMGDTPAPDGRFFFSVERFDYTKGIMEKLQAYKRYFERHPDRIGKDVLFQIAVTNRRSVDTYRVYQDECIDLADKINEIFKDPNNPTWKPLVFQTDGLPRSELVAAYLAMDIGVVTPKKDGMNLVAKEMLVCNPKAGLVLSTGAGSEIQFTTAGLYSDKEKNYHRISNVFDPDSYCDAFYSAALEPEDVRAEHGKRLHEFIMANDIERWSCAFLDPSWTHEVIRPTQVETLDDFFSLMMKTRNVRRQIVGRVLKGIPIRSHFAISLRNAKESLEQICKPGTHTAEFKSGPDSKEVAHFEIDNELQEFERDLSFIDYVQSDDADNVEQFVDTLISSHPISVETYKKEVENAVELLYSADHFHYFFTDRDGTLKSYSCSYPSSIQPAYSGVIQAQFARRCAQTCVILTTAPLMHIGVLDVSTIPNGYYYFGASGGREWFIDNGHNFKDESILKGEKADVLASAYTRISHLLEEPEFRPFTWVGSGLQKHYGHLTIAFQDVYKTITEAQGKQLHEEIEKIVKDVDPHGTRLQLASTEFDIKVYMKTETDGHVFDKGDGLRLLCEKMHCDLTEGNVLVCGDSSTDIPMLKECLIRNPKGVYTIWVTVNDKLKEEVRALCASYSNSNVAFVSCPEVLLGAMAQATIREITITRTRKMSRNIV.

The disordered stretch occupies residues 196–233 (VSSDSEGEEAIHNVRSGTHTESESEEDPKAPRSGLATS). The span at 213–225 (THTESESEEDPKA) shows a compositional bias: basic and acidic residues.

It in the N-terminal section; belongs to the glycosyltransferase 20 family. In the C-terminal section; belongs to the gob-1 trehalose phosphatase family.

It catalyses the reaction D-glucose 6-phosphate + UDP-alpha-D-glucose = alpha,alpha-trehalose 6-phosphate + UDP + H(+). Catalyzes the production of trehalose from glucose-6-phosphate and UDP-alpha-D-glucose in a 2 step process. The sequence is that of Alpha,alpha-trehalose-phosphate synthase [UDP-forming] 2 (tps-2) from Caenorhabditis elegans.